We begin with the raw amino-acid sequence, 383 residues long: Schlafen-like protein 3 (383 aa).

Positions 118–266 (FDYQSNFSDV…SDKVYQISSG (149 aa)) are SLFN-like fold. A helical transmembrane segment spans residues 354 to 374 (LLDIQNIGWIFFGTALSFCIY).

This sequence belongs to the Schlafen family. As to quaternary structure, component of the PUCH (precursor of 21U RNA 5'-end cleavage holoenzyme) complex; consisting of tofu-1, tofu-2 and either slfl-3 or slfl-4. Within the complex, interacts (via N-terminus) with tofu-2 (via N-terminus); the presence of tofu-1 is required for the interaction.

Its subcellular location is the mitochondrion membrane. In terms of biological role, component of the trimeric PUCH (precursor of 21U RNA 5'-end cleavage holoenzyme) complex, that acts as an endoribonuclease processing the 5'-end of precursor Piwi-interacting RNAs (piRNAs). The PUCH complex consists of tofu-1, tofu-2 and either slfl-3 or slfl-4, where tofu-2 exhibits endoribonuclease activity. PUCH-mediated processing strictly requires a 7-methyl-G cap (m7 G-cap) and an uracil at position three (U3). PUCH also exhibits a strict bias for piRNA precursors with an A or G at position 1. Mature piRNA production is enhanced by the interaction of PUCH with the PETISCO complex, which is stabilizing piRNA precursors and allows their processing by PUCH. This chain is Schlafen-like protein 3, found in Caenorhabditis elegans.